Reading from the N-terminus, the 722-residue chain is Putative tyrosine-protein kinase in cps region (722 aa).

A run of 2 helical transmembrane segments spans residues 31–53 (IIIA…ATPI) and 427–449 (IVVL…VRIL).

Belongs to the etk/wzc family. Post-translationally, autophosphorylated on tyrosine residue(s).

The protein localises to the cell inner membrane. The catalysed reaction is L-tyrosyl-[protein] + ATP = O-phospho-L-tyrosyl-[protein] + ADP + H(+). It functions in the pathway glycan metabolism; exopolysaccharide biosynthesis. This Klebsiella pneumoniae protein is Putative tyrosine-protein kinase in cps region.